Here is a 282-residue protein sequence, read N- to C-terminus: Probable transcription factor At1g66420 (282 aa).

A disordered region spans residues 33 to 73; it reads SKKNEEFCGGSGKVQPSEMKRRSEGTSTDMTSKRAKKVSAE.

This sequence belongs to the GeBP family.

This is Probable transcription factor At1g66420 from Arabidopsis thaliana (Mouse-ear cress).